A 319-amino-acid chain; its full sequence is Coproporphyrin III ferrochelatase 2 (319 aa).

Fe-coproporphyrin III is bound by residues Tyr-13, Arg-30, 46–47, Ser-54, and Tyr-125; that span reads RY. 2 residues coordinate Fe(2+): His-181 and Glu-262.

Belongs to the ferrochelatase family.

Its subcellular location is the cytoplasm. The enzyme catalyses Fe-coproporphyrin III + 2 H(+) = coproporphyrin III + Fe(2+). The protein operates within porphyrin-containing compound metabolism; protoheme biosynthesis. In terms of biological role, involved in coproporphyrin-dependent heme b biosynthesis. Catalyzes the insertion of ferrous iron into coproporphyrin III to form Fe-coproporphyrin III. In Bacillus cereus (strain ATCC 14579 / DSM 31 / CCUG 7414 / JCM 2152 / NBRC 15305 / NCIMB 9373 / NCTC 2599 / NRRL B-3711), this protein is Coproporphyrin III ferrochelatase 2.